Consider the following 101-residue polypeptide: Iron-sulfur cluster assembly protein CyaY (101 aa).

This sequence belongs to the frataxin family.

Functionally, involved in iron-sulfur (Fe-S) cluster assembly. May act as a regulator of Fe-S biogenesis. The polypeptide is Iron-sulfur cluster assembly protein CyaY (Actinobacillus pleuropneumoniae serotype 7 (strain AP76)).